A 225-amino-acid chain; its full sequence is NAD(P)H-quinone oxidoreductase subunit K, chloroplastic (225 aa).

[4Fe-4S] cluster-binding residues include Cys43, Cys44, Cys108, and Cys139.

Belongs to the complex I 20 kDa subunit family. As to quaternary structure, NDH is composed of at least 16 different subunits, 5 of which are encoded in the nucleus. [4Fe-4S] cluster serves as cofactor.

The protein resides in the plastid. The protein localises to the chloroplast thylakoid membrane. The catalysed reaction is a plastoquinone + NADH + (n+1) H(+)(in) = a plastoquinol + NAD(+) + n H(+)(out). It catalyses the reaction a plastoquinone + NADPH + (n+1) H(+)(in) = a plastoquinol + NADP(+) + n H(+)(out). In terms of biological role, NDH shuttles electrons from NAD(P)H:plastoquinone, via FMN and iron-sulfur (Fe-S) centers, to quinones in the photosynthetic chain and possibly in a chloroplast respiratory chain. The immediate electron acceptor for the enzyme in this species is believed to be plastoquinone. Couples the redox reaction to proton translocation, and thus conserves the redox energy in a proton gradient. The sequence is that of NAD(P)H-quinone oxidoreductase subunit K, chloroplastic from Nandina domestica (Heavenly bamboo).